Reading from the N-terminus, the 67-residue chain is Prokaryotic ubiquitin-like protein Pup (67 aa).

Positions 1–26 (MATKETGGQKHATRRNQEVEEIEVTT) are disordered. An ARC ATPase binding region spans residues 23–61 (EVTTETSVRNEKLAEDVDDILDEIDEVLESNAEDFVRQF). Residues 27 to 55 (ETSVRNEKLAEDVDDILDEIDEVLESNAE) are a coiled coil. An Isoglutamyl lysine isopeptide (Glu-Lys) (interchain with K-? in acceptor proteins) cross-link involves residue glutamate 67.

The protein belongs to the prokaryotic ubiquitin-like protein family. As to quaternary structure, strongly interacts with the proteasome-associated ATPase ARC through a hydrophobic interface; the interacting region of Pup lies in its C-terminal half. There is one Pup binding site per ARC hexamer ring.

It participates in protein degradation; proteasomal Pup-dependent pathway. Functionally, protein modifier that is covalently attached to lysine residues of substrate proteins, thereby targeting them for proteasomal degradation. The tagging system is termed pupylation. This chain is Prokaryotic ubiquitin-like protein Pup, found in Thermobifida fusca (strain YX).